The following is a 72-amino-acid chain: UPF0154 protein EF_1734 (72 aa).

The chain crosses the membrane as a helical span at residues 4–26 (GWVVLIAVIALLVGAAGGFFLAR).

It belongs to the UPF0154 family.

The protein localises to the membrane. The sequence is that of UPF0154 protein EF_1734 from Enterococcus faecalis (strain ATCC 700802 / V583).